The primary structure comprises 98 residues: U11-barytoxin-Tl1b (98 aa).

A signal peptide spans 1–21 (MKTLVLVAVLGLASLYLLSYA). Residues 22 to 50 (SEVQQLSRDEEEFRALVASFGGLFDTEER) constitute a propeptide that is removed on maturation. 3 disulfides stabilise this stretch: Cys-57/Cys-71, Cys-64/Cys-76, and Cys-70/Cys-89.

The protein belongs to the neurotoxin 10 (Hwtx-1) family. 25 (ICK4) subfamily. As to expression, expressed by the venom gland.

It localises to the secreted. Its function is as follows. Ion channel inhibitor. This chain is U11-barytoxin-Tl1b, found in Trittame loki (Brush-footed trapdoor spider).